The chain runs to 244 residues: Multiple organellar RNA editing factor 3, mitochondrial (244 aa).

The transit peptide at 1–62 directs the protein to the mitochondrion; sequence MALISTRRTL…GPCYISTRPK (62 aa). Disordered stretches follow at residues 59–82 and 196–244; these read TRPKTSGSGYSPLNDPSPNWSNRP and YRFT…KPSA. A compositionally biased stretch (polar residues) spans 60 to 80; that stretch reads RPKTSGSGYSPLNDPSPNWSN. Basic and acidic residues predominate over residues 210–226; the sequence is PRYDRRRETMQVERREP.

This sequence belongs to the MORF family. As to quaternary structure, heterodimer with MORF1. Homodimer and heterodimers with MORF8/RIP1, MORF4/RIP4 and MORF5/RIP5.

It localises to the mitochondrion. Its function is as follows. Involved in organellar RNA editing. Required for the processing of RNA editing sites in mitochondria. This chain is Multiple organellar RNA editing factor 3, mitochondrial, found in Arabidopsis thaliana (Mouse-ear cress).